Consider the following 225-residue polypeptide: 3-dehydroquinate dehydratase (225 aa).

3-dehydroquinate contacts are provided by residues 30–32 and arginine 62; that span reads EWR. Catalysis depends on histidine 118, which acts as the Proton donor/acceptor. Residue lysine 143 is the Schiff-base intermediate with substrate of the active site. 3-dehydroquinate is bound by residues arginine 186, serine 205, and glutamine 209.

The protein belongs to the type-I 3-dehydroquinase family. In terms of assembly, homodimer.

It carries out the reaction 3-dehydroquinate = 3-dehydroshikimate + H2O. Its pathway is metabolic intermediate biosynthesis; chorismate biosynthesis; chorismate from D-erythrose 4-phosphate and phosphoenolpyruvate: step 3/7. Functionally, involved in the third step of the chorismate pathway, which leads to the biosynthesis of aromatic amino acids. Catalyzes the cis-dehydration of 3-dehydroquinate (DHQ) and introduces the first double bond of the aromatic ring to yield 3-dehydroshikimate. In Streptococcus thermophilus (strain ATCC BAA-250 / LMG 18311), this protein is 3-dehydroquinate dehydratase.